Here is a 319-residue protein sequence, read N- to C-terminus: Acetyl esterase (319 aa).

The Involved in the stabilization of the negatively charged intermediate by the formation of the oxyanion hole signature appears at 91-93; it reads HGG. Residues Ser165, Asp262, and His292 contribute to the active site.

This sequence belongs to the 'GDXG' lipolytic enzyme family. In terms of assembly, homodimer. Interacts with MalT and MelA.

Its subcellular location is the cytoplasm. Displays esterase activity towards short chain fatty esters (acyl chain length of up to 8 carbons). Able to hydrolyze triacetylglycerol (triacetin) and tributyrylglycerol (tributyrin), but not trioleylglycerol (triolein) or cholesterol oleate. Negatively regulates MalT activity by antagonizing maltotriose binding. Inhibits MelA galactosidase activity. In Escherichia coli O81 (strain ED1a), this protein is Acetyl esterase.